Reading from the N-terminus, the 103-residue chain is Sec-independent protein translocase protein TatA (103 aa).

Residues 1-21 (MGNIFSPTHLIVILLIIIVLF) traverse the membrane as a helical segment. The interval 77 to 103 (KRATTRVKGSSSSRKGKTSVVKKQRVK) is disordered. Positions 90-103 (RKGKTSVVKKQRVK) are enriched in basic residues.

This sequence belongs to the TatA/E family. As to quaternary structure, the Tat system comprises two distinct complexes: a TatABC complex, containing multiple copies of TatA, TatB and TatC subunits, and a separate TatA complex, containing only TatA subunits. Substrates initially bind to the TatABC complex, which probably triggers association of the separate TatA complex to form the active translocon.

Its subcellular location is the cell inner membrane. In terms of biological role, part of the twin-arginine translocation (Tat) system that transports large folded proteins containing a characteristic twin-arginine motif in their signal peptide across membranes. TatA could form the protein-conducting channel of the Tat system. The polypeptide is Sec-independent protein translocase protein TatA (Bartonella henselae (strain ATCC 49882 / DSM 28221 / CCUG 30454 / Houston 1) (Rochalimaea henselae)).